The sequence spans 766 residues: Dipeptidyl peptidase 4 (766 aa).

The Cytoplasmic portion of the chain corresponds to 1 to 6 (MKTPWK). Residues 7 to 28 (VLLGLLGAAALVTIITVPVVLL) traverse the membrane as a helical; Signal-anchor for type II membrane protein segment. At 29–766 (NKGTDDATAD…HFIKQCFSLP (738 aa)) the chain is on the extracellular side. N-linked (GlcNAc...) asparagine glycosylation is found at N85, N92, N150, N219, N229, N281, and N321. Disulfide bonds link C328–C339, C385–C394, C444–C447, and C454–C472. N520 is a glycosylation site (N-linked (GlcNAc...) asparagine). The active-site Charge relay system is S630. The cysteines at positions 649 and 762 are disulfide-linked. N-linked (GlcNAc...) asparagine glycosylation occurs at N685. Residues D708 and H740 each act as charge relay system in the active site.

This sequence belongs to the peptidase S9B family. DPPIV subfamily. Monomer. Homodimer. Heterodimer with Seprase (FAP). Requires homodimerization for optimal dipeptidyl peptidase activity and T-cell costimulation. Found in a membrane raft complex, at least composed of BCL10, CARD11, DPP4 and IKBKB. Associates with collagen. Interacts with PTPRC; the interaction is enhanced in an interleukin-12-dependent manner in activated lymphocytes. Interacts (via extracellular domain) with ADA; does not inhibit its dipeptidyl peptidase activity. Interacts with CAV1 (via the N-terminus); the interaction is direct. Interacts (via cytoplasmic tail) with CARD11 (via PDZ domain); its homodimerization is necessary for interaction with CARD11. Interacts with IGF2R; the interaction is direct. Interacts with GPC3. Interacts with human coronavirus-EMC spike protein and acts as a receptor for this virus. In terms of assembly, (Microbial infection) Interacts with MERS coronavirus/MERS-CoV spike protein. The soluble form (Dipeptidyl peptidase 4 soluble form also named SDPP) derives from the membrane form (Dipeptidyl peptidase 4 membrane form also named MDPP) by proteolytic processing. In terms of processing, N- and O-Glycosylated. Post-translationally, phosphorylated. Mannose 6-phosphate residues in the carbohydrate moiety are necessary for interaction with IGF2R in activated T-cells. Mannose 6-phosphorylation is induced during T-cell activation. Expressed specifically in lymphatic vessels but not in blood vessels in the skin, small intestine, esophagus, ovary, breast and prostate glands. Not detected in lymphatic vessels in the lung, kidney, uterus, liver and stomach (at protein level). Expressed in the poorly differentiated crypt cells of the small intestine as well as in the mature villous cells. Expressed at very low levels in the colon.

The protein localises to the secreted. Its subcellular location is the cell membrane. It localises to the apical cell membrane. It is found in the cell projection. The protein resides in the invadopodium membrane. The protein localises to the lamellipodium membrane. Its subcellular location is the cell junction. It localises to the membrane raft. It catalyses the reaction Release of an N-terminal dipeptide, Xaa-Yaa-|-Zaa-, from a polypeptide, preferentially when Yaa is Pro, provided Zaa is neither Pro nor hydroxyproline.. With respect to regulation, inhibited by GPC3 and diprotin A. Its function is as follows. Cell surface glycoprotein receptor involved in the costimulatory signal essential for T-cell receptor (TCR)-mediated T-cell activation. Acts as a positive regulator of T-cell coactivation, by binding at least ADA, CAV1, IGF2R, and PTPRC. Its binding to CAV1 and CARD11 induces T-cell proliferation and NF-kappa-B activation in a T-cell receptor/CD3-dependent manner. Its interaction with ADA also regulates lymphocyte-epithelial cell adhesion. In association with FAP is involved in the pericellular proteolysis of the extracellular matrix (ECM), the migration and invasion of endothelial cells into the ECM. May be involved in the promotion of lymphatic endothelial cells adhesion, migration and tube formation. When overexpressed, enhanced cell proliferation, a process inhibited by GPC3. Also acts as a serine exopeptidase with a dipeptidyl peptidase activity that regulates various physiological processes by cleaving peptides in the circulation, including many chemokines, mitogenic growth factors, neuropeptides and peptide hormones such as brain natriuretic peptide 32. Removes N-terminal dipeptides sequentially from polypeptides having unsubstituted N-termini provided that the penultimate residue is proline. In terms of biological role, (Microbial infection) Acts as a receptor for human coronavirus MERS-CoV-2. The protein is Dipeptidyl peptidase 4 of Homo sapiens (Human).